Here is a 428-residue protein sequence, read N- to C-terminus: 3-phosphoshikimate 1-carboxyvinyltransferase (428 aa).

3-phosphoshikimate-binding residues include Lys21, Ser22, and Arg26. Lys21 is a binding site for phosphoenolpyruvate. 2 residues coordinate phosphoenolpyruvate: Gly91 and Arg119. 4 residues coordinate 3-phosphoshikimate: Ser164, Gln166, Asp311, and Lys338. Residue Gln166 coordinates phosphoenolpyruvate. Asp311 acts as the Proton acceptor in catalysis. Phosphoenolpyruvate is bound by residues Arg342 and Arg383.

It belongs to the EPSP synthase family. In terms of assembly, monomer.

Its subcellular location is the cytoplasm. It carries out the reaction 3-phosphoshikimate + phosphoenolpyruvate = 5-O-(1-carboxyvinyl)-3-phosphoshikimate + phosphate. It functions in the pathway metabolic intermediate biosynthesis; chorismate biosynthesis; chorismate from D-erythrose 4-phosphate and phosphoenolpyruvate: step 6/7. Functionally, catalyzes the transfer of the enolpyruvyl moiety of phosphoenolpyruvate (PEP) to the 5-hydroxyl of shikimate-3-phosphate (S3P) to produce enolpyruvyl shikimate-3-phosphate and inorganic phosphate. The polypeptide is 3-phosphoshikimate 1-carboxyvinyltransferase (Campylobacter concisus (strain 13826)).